The sequence spans 115 residues: Nitrogen regulatory protein P-II 2 (115 aa).

O-UMP-tyrosine is present on Y54.

This sequence belongs to the P(II) protein family.

Could be involved in the regulation of nitrogen fixation. The protein is Nitrogen regulatory protein P-II 2 of Methanothermobacter thermautotrophicus (strain ATCC 29096 / DSM 1053 / JCM 10044 / NBRC 100330 / Delta H) (Methanobacterium thermoautotrophicum).